The primary structure comprises 449 residues: N-succinylarginine dihydrolase (449 aa).

Substrate is bound by residues 19 to 28, N110, and 137 to 138; these read GGLSYGNVAS and HR. Residues 23-43 form a disordered region; it reads YGNVASQSNSQQASNPREAAR. Positions 27–37 are enriched in low complexity; sequence ASQSNSQQASN. The active site involves E174. R214 lines the substrate pocket. The active site involves H250. The substrate site is built by D252 and N365. C371 serves as the catalytic Nucleophile.

This sequence belongs to the succinylarginine dihydrolase family. In terms of assembly, homodimer.

It carries out the reaction N(2)-succinyl-L-arginine + 2 H2O + 2 H(+) = N(2)-succinyl-L-ornithine + 2 NH4(+) + CO2. Its pathway is amino-acid degradation; L-arginine degradation via AST pathway; L-glutamate and succinate from L-arginine: step 2/5. Its function is as follows. Catalyzes the hydrolysis of N(2)-succinylarginine into N(2)-succinylornithine, ammonia and CO(2). The sequence is that of N-succinylarginine dihydrolase from Pseudomonas putida (strain ATCC 47054 / DSM 6125 / CFBP 8728 / NCIMB 11950 / KT2440).